The following is a 381-amino-acid chain: MPFGNTHNKYKLNFKAEEEYPDLSKHNNHMAKALTLEIYKKLRDKETPSGFTLDDVIQTGVDNPGHPFIMTVGCVAGDEESYVVFKDLFDPIIQDRHGGYKPTDKHKTDLNHENLKGGDDLDPNYVLSSRVRTGRSIKGYTLPPHCSRGERRAVEKLSVEALNSLTGEFKGKYYPLKSMTEQEQQQLIDDHFLFDKPVSPLLLASGMARDWPDARGIWHNDNKSFLVWVNEEDHLRVISMEKGGNMKEVFRRFCVGLQKIEEIFKKAGHPFMWNEHLGYVLTCPSNLGTGLRGGVHVKLAHLSKHPKFEEILTRLRLQKRGTGGVDTAAVGSVFDVSNADRLGSSEVEQVQLVVDGVKLMVEMEKKLEKGQSIDDMIPAQK.

Positions 11–98 (KLNFKAEEEY…FDPIIQDRHG (88 aa)) constitute a Phosphagen kinase N-terminal domain. One can recognise a Phosphagen kinase C-terminal domain in the interval 125-367 (YVLSSRVRTG…KLMVEMEKKL (243 aa)). 128–132 (SSRVR) is an ATP binding site. A Phosphoserine modification is found at Ser-164. Phosphothreonine is present on Thr-166. Ser-178 is subject to Phosphoserine. The residue at position 180 (Thr-180) is a Phosphothreonine. ATP is bound at residue His-191. A Phosphoserine modification is found at Ser-199. Arg-236 and Arg-292 together coordinate ATP. Thr-313 and Thr-322 each carry phosphothreonine. ATP-binding positions include 320–325 (RGTGGV) and Asp-335. Ser-372 carries the phosphoserine modification.

It belongs to the ATP:guanido phosphotransferase family. As to quaternary structure, dimer of identical or non-identical chains, which can be either B (brain type) or M (muscle type). With MM being the major form in skeletal muscle and myocardium, MB existing in myocardium, and BB existing in many tissues, especially brain.

The catalysed reaction is creatine + ATP = N-phosphocreatine + ADP + H(+). Reversibly catalyzes the transfer of phosphate between ATP and various phosphogens (e.g. creatine phosphate). Creatine kinase isoenzymes play a central role in energy transduction in tissues with large, fluctuating energy demands, such as skeletal muscle, heart, brain and spermatozoa. This Sus scrofa (Pig) protein is Creatine kinase M-type (CKM).